The following is a 311-amino-acid chain: tRNA (cytosine(49)-C(5))-methyltransferase (311 aa).

Residues 118 to 124 (AAAPGSK), Asp-142, Asp-169, and Asp-186 contribute to the S-adenosyl-L-methionine site. Cys-239 acts as the Nucleophile in catalysis.

This sequence belongs to the class I-like SAM-binding methyltransferase superfamily. RsmB/NOP family. As to quaternary structure, forms a tripartite complex with archease and tRNA. Binds only the oligomeric forms of the archease.

Its subcellular location is the cytoplasm. The enzyme catalyses cytidine(49) in tRNA precursor + S-adenosyl-L-methionine = 5-methylcytidine(49) in tRNA precursor + S-adenosyl-L-homocysteine + H(+). With respect to regulation, substrate specificity and tendency to aggregate are influenced by archease. Functionally, catalyzes AdoMet-dependent formation of m5C in tRNA. In the presence of protein archease, specifically methylates the cytosine at position 49 (m5C49) of tRNA. In the absence of archease, catalyzes the formation of m5C at many locations in tRNAs or rRNAs. In Pyrococcus abyssi (strain GE5 / Orsay), this protein is tRNA (cytosine(49)-C(5))-methyltransferase.